We begin with the raw amino-acid sequence, 82 residues long: MKVAILFLSILVLAVASESIEESRDDFAVEELGRATCAGQDQPCKETCDCCGERGECVCGGPCICRQGYFWIAWYKLANCKK.

An N-terminal signal peptide occupies residues 1–17 (MKVAILFLSILVLAVAS). Residues 18-34 (ESIEESRDDFAVEELGR) constitute a propeptide that is removed on maturation. Intrachain disulfides connect Cys37–Cys51, Cys44–Cys57, Cys48–Cys80, Cys50–Cys65, and Cys59–Cys63.

It belongs to the neurotoxin 03 (Tx2) family. 06 subfamily. In terms of tissue distribution, expressed by the venom gland.

The protein resides in the secreted. Its function is as follows. Toxin that is known to potentiate erectile function. It binds voltage-dependently to sodium channels (Nav), inhibits the inactivation of the activated channels and decreases the peak inward current. The toxin delays inactivation of Nav1.2/SCN2A, Nav1.3/SCN3A, Nav1.4/SCN4A and Nav1.8/SCN10A, slows the inactivation process and decreases the sodium peak amplitude of Nav1.5/SCN5A and Nav1.6/SCN8A. In vivo, it enhances erectile function by inducing the release of nictric oxide (NO): it slows the sodium current, leading to depolarization, which leads to an increase in calcium influx (probably via activation of N-type calcium channels) which in turn activates neuronal NO synthase (nNOS/NOS1), inducing nitric oxide (NO) production. In a final step, NO activates soluble guanylate cyclase (GUCY1A1/GUCY1B1) which in turn increases cGMP formation, resulting in penile erection. It is noteworthy that the toxin does not provoke erection by inhibiting phosphodiesterase type 5 (PDE5A), an enzyme that hydrolysis cGMP. In vivo, it also causes scratching, lacrimation, hypersalivation, sweating and agitation followed by spastic paralysis of the anterior and posterior extremities and death at dose levels of 0.79 mg/mouse. It is insecticidal to the larval and adult forms of the house fly. The toxin also improves cavernosal relaxation in different models where erectile dysfunction is observed, such as deoxycorticosterone-acetate (DOCA)-salt hypertensive rats, mice models for type-1 diabetes, as well as elderly rats. The sequence is that of Delta-ctenitoxin-Pn2a from Phoneutria nigriventer (Brazilian armed spider).